We begin with the raw amino-acid sequence, 278 residues long: Thiazole synthase (278 aa).

The active-site Schiff-base intermediate with DXP is the Lys-109. Residues Gly-170, 197–198, and 219–220 each bind 1-deoxy-D-xylulose 5-phosphate; these read AG and NT.

The protein belongs to the ThiG family. As to quaternary structure, homotetramer. Forms heterodimers with either ThiH or ThiS.

It is found in the cytoplasm. The enzyme catalyses [ThiS sulfur-carrier protein]-C-terminal-Gly-aminoethanethioate + 2-iminoacetate + 1-deoxy-D-xylulose 5-phosphate = [ThiS sulfur-carrier protein]-C-terminal Gly-Gly + 2-[(2R,5Z)-2-carboxy-4-methylthiazol-5(2H)-ylidene]ethyl phosphate + 2 H2O + H(+). It functions in the pathway cofactor biosynthesis; thiamine diphosphate biosynthesis. Its function is as follows. Catalyzes the rearrangement of 1-deoxy-D-xylulose 5-phosphate (DXP) to produce the thiazole phosphate moiety of thiamine. Sulfur is provided by the thiocarboxylate moiety of the carrier protein ThiS. In vitro, sulfur can be provided by H(2)S. In Cupriavidus necator (strain ATCC 17699 / DSM 428 / KCTC 22496 / NCIMB 10442 / H16 / Stanier 337) (Ralstonia eutropha), this protein is Thiazole synthase.